Here is a 108-residue protein sequence, read N- to C-terminus: Protein YcgL (108 aa).

The YcgL domain occupies 12 to 96 (MFCVIYRSSK…PPEDLLKQHL (85 aa)).

The polypeptide is Protein YcgL (Escherichia coli O17:K52:H18 (strain UMN026 / ExPEC)).